The primary structure comprises 559 residues: Formate--tetrahydrofolate ligase (559 aa).

68–75 is a binding site for ATP; it reads TPAGEGKT.

This sequence belongs to the formate--tetrahydrofolate ligase family.

It catalyses the reaction (6S)-5,6,7,8-tetrahydrofolate + formate + ATP = (6R)-10-formyltetrahydrofolate + ADP + phosphate. The protein operates within one-carbon metabolism; tetrahydrofolate interconversion. The polypeptide is Formate--tetrahydrofolate ligase (Moorella thermoacetica (strain ATCC 39073 / JCM 9320)).